Consider the following 353-residue polypeptide: Phenol 2-monooxygenase, reductase component DmpP (353 aa).

The 2Fe-2S ferredoxin-type domain occupies 3 to 93 (YNVTIEPTGE…DLVIEADVDA (91 aa)). [2Fe-2S] cluster-binding residues include Cys-37, Cys-42, Cys-45, and Cys-77. Residues 102 to 201 (VEDYRGVVSA…SGPYGQFFVR (100 aa)) form the FAD-binding FR-type domain.

The multicomponent enzyme phenol hydroxylase is formed by DmpL (P1 component), DmpM (P2 component), DmpN (P3 component), DmpO (P4 component) and DmpP (P5 component). FAD is required as a cofactor. Requires [2Fe-2S] cluster as cofactor.

It catalyses the reaction phenol + NADH + O2 + H(+) = catechol + NAD(+) + H2O. It participates in aromatic compound metabolism; phenol degradation. Part of a multicomponent enzyme which catalyzes the degradation of phenol and some of its methylated derivatives. DmpP probably transfers electrons from NADH, via FAD and the iron-sulfur center, to the oxygenase component of the complex. Required for growth on phenol and for in vitro phenol hydroxylase activity. The polypeptide is Phenol 2-monooxygenase, reductase component DmpP (Pseudomonas sp. (strain CF600)).